The primary structure comprises 949 residues: Nonsense-mediated mRNA decay factor SMG8 (949 aa).

Disordered stretches follow at residues 564–607 (SGAR…LSPT), 624–652 (NESQ…DTEN), and 748–768 (PKQQ…QQRW). Acidic residues predominate over residues 571 to 581 (EGDDEPEDEVV). Residues 594–607 (NTASNGCSQPLSPT) show a composition bias toward polar residues. Residues 624–648 (NESQASSEQLSNSEQNTSSSGTSSA) show a composition bias toward low complexity. Residues 749-768 (KQQHHTHHQQQHPGKKQQRW) are compositionally biased toward basic residues.

This sequence belongs to the SMG8 family.

Involved in nonsense-mediated decay (NMD) of mRNAs containing premature stop codons. Probable component of kinase complex containing nonC and recruited to stalled ribosomes. The protein is Nonsense-mediated mRNA decay factor SMG8 of Drosophila erecta (Fruit fly).